The sequence spans 405 residues: 4-hydroxy-3-methylbut-2-en-1-yl diphosphate synthase (flavodoxin) (405 aa).

Positions 297, 300, 343, and 350 each coordinate [4Fe-4S] cluster.

Belongs to the IspG family. [4Fe-4S] cluster serves as cofactor.

It catalyses the reaction (2E)-4-hydroxy-3-methylbut-2-enyl diphosphate + oxidized [flavodoxin] + H2O + 2 H(+) = 2-C-methyl-D-erythritol 2,4-cyclic diphosphate + reduced [flavodoxin]. It participates in isoprenoid biosynthesis; isopentenyl diphosphate biosynthesis via DXP pathway; isopentenyl diphosphate from 1-deoxy-D-xylulose 5-phosphate: step 5/6. In terms of biological role, converts 2C-methyl-D-erythritol 2,4-cyclodiphosphate (ME-2,4cPP) into 1-hydroxy-2-methyl-2-(E)-butenyl 4-diphosphate. In Francisella tularensis subsp. mediasiatica (strain FSC147), this protein is 4-hydroxy-3-methylbut-2-en-1-yl diphosphate synthase (flavodoxin).